Reading from the N-terminus, the 407-residue chain is Chorismate synthase (407 aa).

Residues Arg-40 and Arg-46 each coordinate NADP(+). Residues 135-137 (RAS), 256-257 (QA), Gly-300, 315-319 (KPIST), and Arg-341 each bind FMN.

This sequence belongs to the chorismate synthase family. As to quaternary structure, homotetramer. FMNH2 serves as cofactor.

The catalysed reaction is 5-O-(1-carboxyvinyl)-3-phosphoshikimate = chorismate + phosphate. Its pathway is metabolic intermediate biosynthesis; chorismate biosynthesis; chorismate from D-erythrose 4-phosphate and phosphoenolpyruvate: step 7/7. Catalyzes the anti-1,4-elimination of the C-3 phosphate and the C-6 proR hydrogen from 5-enolpyruvylshikimate-3-phosphate (EPSP) to yield chorismate, which is the branch point compound that serves as the starting substrate for the three terminal pathways of aromatic amino acid biosynthesis. This reaction introduces a second double bond into the aromatic ring system. In Mycobacterium leprae (strain Br4923), this protein is Chorismate synthase.